A 311-amino-acid polypeptide reads, in one-letter code: Pyrimidine-specific ribonucleoside hydrolase RihA (311 aa).

His-240 is an active-site residue.

The protein belongs to the IUNH family. RihA subfamily.

In terms of biological role, hydrolyzes cytidine or uridine to ribose and cytosine or uracil, respectively. This is Pyrimidine-specific ribonucleoside hydrolase RihA from Salmonella arizonae (strain ATCC BAA-731 / CDC346-86 / RSK2980).